We begin with the raw amino-acid sequence, 95 residues long: Large ribosomal subunit protein bL27 (95 aa).

Residues 1 to 8 constitute a propeptide that is removed on maturation; that stretch reads MEMNLQFF. Positions 1-34 are disordered; the sequence is MEMNLQFFSHHKGGGSTSNGRDSAGRRLGTKRAD.

This sequence belongs to the bacterial ribosomal protein bL27 family. In terms of processing, the N-terminus is cleaved by ribosomal processing cysteine protease Prp.

The protein is Large ribosomal subunit protein bL27 of Pediococcus pentosaceus (strain ATCC 25745 / CCUG 21536 / LMG 10740 / 183-1w).